Consider the following 332-residue polypeptide: MAEKIYDVTIIGGGPAGMFASFYCGLHELDAQLIESLPQLGGQVGALYPEKQVWDVAGMPGVTGHDLIAKLEEQMAVAPIDQFLGETVEDVIKGDDGTFTIKSAKRVSRSRAVIIALGNGAFTPRKLALEGAAEIEGKQLSYFVNHKADYADKRVAILGGGDSAIDIALMLEPVAKEVHLVHRRDQFRGLEHTVTQLKQSSVQLDTPFLPRALTVEDDETVTLDLKKMRSDDEAQLNVDKIVVNYGFTSNNAALNQWSLDLAAEHNLIKVDSMMETSTEGVYAIGDGVTYPGKVALIAAGFGEAPTAVTALAKKLYPDKRMAMHSSSMGITK.

Residues E35, Q43, Y48, V88, F122, D286, and S326 each contribute to the FAD site.

It belongs to the ferredoxin--NADP reductase type 2 family. Homodimer. Requires FAD as cofactor.

The catalysed reaction is 2 reduced [2Fe-2S]-[ferredoxin] + NADP(+) + H(+) = 2 oxidized [2Fe-2S]-[ferredoxin] + NADPH. This is Ferredoxin--NADP reductase from Limosilactobacillus reuteri (strain DSM 20016) (Lactobacillus reuteri).